A 189-amino-acid chain; its full sequence is Chitin synthase 1 (189 aa).

Belongs to the chitin synthase family. Class I subfamily.

Its subcellular location is the cell membrane. The enzyme catalyses [(1-&gt;4)-N-acetyl-beta-D-glucosaminyl](n) + UDP-N-acetyl-alpha-D-glucosamine = [(1-&gt;4)-N-acetyl-beta-D-glucosaminyl](n+1) + UDP + H(+). Its function is as follows. Polymerizes chitin, a structural polymer of the cell wall and septum, by transferring the sugar moiety of UDP-GlcNAc to the non-reducing end of the growing chitin polymer. In Exophiala jeanselmei (Dematiaceous fungus), this protein is Chitin synthase 1 (CHS1).